Reading from the N-terminus, the 123-residue chain is UPF0102 protein MCA0184 (123 aa).

This sequence belongs to the UPF0102 family.

This Methylococcus capsulatus (strain ATCC 33009 / NCIMB 11132 / Bath) protein is UPF0102 protein MCA0184.